The chain runs to 379 residues: Inactive 2'-5'-oligoadenylate synthase 1B (379 aa).

Residues 1 to 355 (MEQELRSIPA…VPTEVDIPSQ (355 aa)) lie on the Cytoplasmic side of the membrane. The helical; Anchor for type IV membrane protein transmembrane segment at 356–374 (NYFFHIICLIFWLLLRLIF) threads the bilayer. Residues 375-379 (GKHSV) lie on the Extracellular side of the membrane.

This sequence belongs to the 2-5A synthase family. Interacts with OSBPL1A and ABCF3. In terms of tissue distribution, highly expressed in the brain, liver, spleen and heart.

The protein localises to the endoplasmic reticulum membrane. Functionally, does not have 2'-5'-OAS activity, but can bind double-stranded RNA. Displays antiviral activity against viruses via an alternative antiviral pathway independent of RNase L. This Rattus norvegicus (Rat) protein is Inactive 2'-5'-oligoadenylate synthase 1B (Oas1b).